Reading from the N-terminus, the 256-residue chain is Carboxysome shell protein CsoS1D (256 aa).

The tract at residues 1–24 (MEPTSSLNRGDRKKGSSLVTGSEV) is disordered. BMC circularly permuted domains follow at residues 55 to 157 (ELRT…RTKP) and 158 to 256 (STSW…ISNY). The Gates the pore motif lies at 120–121 (ER).

The protein belongs to the EutL/PduB family. As to quaternary structure, homotrimer. Forms a dimer of stacked trimers, the same faces interact. A CsoS1-CsoS1D-CsoS2 complex can be isolated following expression in E.coli.

It localises to the carboxysome. Its function is as follows. Part of the carboxysome shell, a polyhedral inclusion where RuBisCO (ribulose bisphosphate carboxylase, cbbL-cbbS) is sequestered. It may control transport of RuBisCO reactants in and out of the carboxysome. There are estimated to be 6 CsoS1D hexamers per carboxysome. The chain is Carboxysome shell protein CsoS1D from Prochlorococcus marinus subsp. pastoris (strain CCMP1986 / NIES-2087 / MED4).